A 95-amino-acid polypeptide reads, in one-letter code: Aspartyl/glutamyl-tRNA(Asn/Gln) amidotransferase subunit C (95 aa).

The protein belongs to the GatC family. Heterotrimer of A, B and C subunits.

It catalyses the reaction L-glutamyl-tRNA(Gln) + L-glutamine + ATP + H2O = L-glutaminyl-tRNA(Gln) + L-glutamate + ADP + phosphate + H(+). The enzyme catalyses L-aspartyl-tRNA(Asn) + L-glutamine + ATP + H2O = L-asparaginyl-tRNA(Asn) + L-glutamate + ADP + phosphate + 2 H(+). Functionally, allows the formation of correctly charged Asn-tRNA(Asn) or Gln-tRNA(Gln) through the transamidation of misacylated Asp-tRNA(Asn) or Glu-tRNA(Gln) in organisms which lack either or both of asparaginyl-tRNA or glutaminyl-tRNA synthetases. The reaction takes place in the presence of glutamine and ATP through an activated phospho-Asp-tRNA(Asn) or phospho-Glu-tRNA(Gln). The chain is Aspartyl/glutamyl-tRNA(Asn/Gln) amidotransferase subunit C from Chlorobium phaeobacteroides (strain DSM 266 / SMG 266 / 2430).